The sequence spans 414 residues: F-box protein At3g47030 (414 aa).

The segment at 1 to 24 (MSGMLGLSAVMGKRPKQQVTARPR) is disordered. In terms of domain architecture, F-box spans 28-77 (IEKPEEIPDDLLIDVFSRLSIEDVARCRCLSRFWSSILRRRYFTELFHKM).

This Arabidopsis thaliana (Mouse-ear cress) protein is F-box protein At3g47030.